A 705-amino-acid chain; its full sequence is Glycine--tRNA ligase beta subunit (705 aa).

This sequence belongs to the class-II aminoacyl-tRNA synthetase family. In terms of assembly, tetramer of two alpha and two beta subunits.

The protein localises to the cytoplasm. The catalysed reaction is tRNA(Gly) + glycine + ATP = glycyl-tRNA(Gly) + AMP + diphosphate. This chain is Glycine--tRNA ligase beta subunit, found in Persephonella marina (strain DSM 14350 / EX-H1).